A 96-amino-acid chain; its full sequence is MQALITISDKQYLVKQGDKLFVPRQQAAIGDKLTIASLAQIDGANTTLQNSNSVQAVVLEHVKDEKVIVFKKKRRKRYQSRNGHRQQMTHIEVLSL.

It belongs to the bacterial ribosomal protein bL21 family. As to quaternary structure, part of the 50S ribosomal subunit. Contacts protein L20.

In terms of biological role, this protein binds to 23S rRNA in the presence of protein L20. This chain is Large ribosomal subunit protein bL21, found in Chlorobium chlorochromatii (strain CaD3).